A 126-amino-acid chain; its full sequence is Large ribosomal subunit protein bL17 (126 aa).

Belongs to the bacterial ribosomal protein bL17 family. As to quaternary structure, part of the 50S ribosomal subunit. Contacts protein L32.

The polypeptide is Large ribosomal subunit protein bL17 (Coxiella burnetii (strain CbuG_Q212) (Coxiella burnetii (strain Q212))).